A 118-amino-acid chain; its full sequence is Protein RALF-like 24 (118 aa).

Residues 1–22 form the signal peptide; it reads MSRSLALVYLSLLCLQTHLSIS. Positions 23–63 are cleaved as a propeptide — removed in mature form; the sequence is VTVPIPSVNGEIDAMLNRNGVIGEEEGEEMMPSEISRRVMM. Intrachain disulfides connect Cys81/Cys91 and Cys103/Cys109.

The protein belongs to the plant rapid alkalinization factor (RALF) family. Post-translationally, proteolytically cleaved, probably by S1P, a subtilisin-like serine protease (subtilase).

The protein resides in the secreted. Cell signaling peptide that may regulate plant stress, growth, and development. Mediates a rapid alkalinization of extracellular space by mediating a transient increase in the cytoplasmic Ca(2+) concentration leading to a calcium-dependent signaling events through a cell surface receptor and a concomitant activation of some intracellular mitogen-activated protein kinases. The protein is Protein RALF-like 24 (RALFL24) of Arabidopsis thaliana (Mouse-ear cress).